Here is a 764-residue protein sequence, read N- to C-terminus: Molybdenum cofactor sulfurase 3 (764 aa).

N6-(pyridoxal phosphate)lysine is present on Lys-228. Cys-394 is an active-site residue. One can recognise an MOSC domain in the interval 607–762 (LRLLKQSDEE…LYCNSVVEGL (156 aa)).

The protein belongs to the class-V pyridoxal-phosphate-dependent aminotransferase family. MOCOS subfamily. It depends on pyridoxal 5'-phosphate as a cofactor.

It catalyses the reaction Mo-molybdopterin + L-cysteine + AH2 = thio-Mo-molybdopterin + L-alanine + A + H2O. Functionally, sulfurates the molybdenum cofactor. Sulfation of molybdenum is essential for xanthine dehydrogenase (XDH) and aldehyde oxidase (ADO) enzymes in which molybdenum cofactor is liganded by 1 oxygen and 1 sulfur atom in active form. The sequence is that of Molybdenum cofactor sulfurase 3 from Aedes aegypti (Yellowfever mosquito).